Reading from the N-terminus, the 615-residue chain is DNA mismatch repair protein MutL (615 aa).

The disordered stretch occupies residues 362 to 397; the sequence is HFAEPAVREPVAPRYSPAPASGSRPAAPWPNAQPGY. The segment covering 373–387 has biased composition (low complexity); it reads APRYSPAPASGSRPA.

It belongs to the DNA mismatch repair MutL/HexB family.

Its function is as follows. This protein is involved in the repair of mismatches in DNA. It is required for dam-dependent methyl-directed DNA mismatch repair. May act as a 'molecular matchmaker', a protein that promotes the formation of a stable complex between two or more DNA-binding proteins in an ATP-dependent manner without itself being part of a final effector complex. The sequence is that of DNA mismatch repair protein MutL from Escherichia coli O81 (strain ED1a).